We begin with the raw amino-acid sequence, 244 residues long: 1-(5-phosphoribosyl)-5-[(5-phosphoribosylamino)methylideneamino] imidazole-4-carboxamide isomerase (244 aa).

Asp8 (proton acceptor) is an active-site residue. Catalysis depends on Asp130, which acts as the Proton donor.

This sequence belongs to the HisA/HisF family.

The protein resides in the cytoplasm. The enzyme catalyses 1-(5-phospho-beta-D-ribosyl)-5-[(5-phospho-beta-D-ribosylamino)methylideneamino]imidazole-4-carboxamide = 5-[(5-phospho-1-deoxy-D-ribulos-1-ylimino)methylamino]-1-(5-phospho-beta-D-ribosyl)imidazole-4-carboxamide. It participates in amino-acid biosynthesis; L-histidine biosynthesis; L-histidine from 5-phospho-alpha-D-ribose 1-diphosphate: step 4/9. The chain is 1-(5-phosphoribosyl)-5-[(5-phosphoribosylamino)methylideneamino] imidazole-4-carboxamide isomerase from Syntrophomonas wolfei subsp. wolfei (strain DSM 2245B / Goettingen).